Here is a 312-residue protein sequence, read N- to C-terminus: Tumor necrosis factor receptor type 1-associated DEATH domain protein (312 aa).

Residues 147-163 (LRDEELTELENALRNLT) carry the Nuclear export signal motif. The tract at residues 166–200 (SAGGQGSDVQGTPAPLQSLAPSPPEEKPPPPQPGQ) is disordered. Positions 215–305 (NLQDQQKFAR…SLAEDLLGLA (91 aa)) constitute a Death domain. Residues 222 to 289 (FARSVGLKWR…ATLQRLVEAL (68 aa)) form an interaction with KRT14 and KRT18 region. Positions 231–244 (RKVGRSLQRSCRAL) match the Nuclear localization signal motif.

Stimulation of TNF-alpha receptor TNFRSF1A leads to the formation of two distinct signaling complexes. Plasma membrane-bound complex I is composed of TNFRSF1A, TRADD, RIPK1, TRAF2 and BIRC2/c-IAP1 or BIRC3 which interacts with CHUCK/IKK-alpha, IKBKB/IKK-beta and IKBKG/IKK-gamma promoting cell survival. Subsequently, TRADD, RIPK1 and TRAF2 dissociate from TNFRSF1A and form cytoplasmic complex II with FADD and caspase CASP8 promoting cell apoptosis. Within complex I, interacts with TNFRSF1A/TNFR1, TRAF2 and kinase RIPK1. Within complex I, interacts with TRPC4AP; the interaction promotes NF-kappa B activation. UXT1 associates with complex I; the interaction prevents the formation of complex II. Within complex I Interacts with scaffold protein DAB2IP. Interacts with autophagy receptor SQSTM1. Interacts with E3 ligase TRIP12. Interacts with kinase HIPK2. Interacts with keratin KRT14. Interacts with keratin KRT18. Interacts with keratins KRT16 and KRT17. Interacts with FADD. Interacts with TOMM70. Interacts with TMC8; the interaction impairs the formation of complex I and facilites complex II formation.

It localises to the nucleus. The protein resides in the cytoplasm. It is found in the cytoskeleton. Functionally, adapter molecule for TNFRSF1A/TNFR1 that specifically associates with the cytoplasmic domain of activated TNFRSF1A/TNFR1 mediating its interaction with FADD. Overexpression of TRADD leads to two major TNF-induced responses, apoptosis and activation of NF-kappa-B. The nuclear form acts as a tumor suppressor by preventing ubiquitination and degradation of isoform p19ARF/ARF of CDKN2A by TRIP12: acts by interacting with TRIP12, leading to disrupt interaction between TRIP12 and isoform p19ARF/ARF of CDKN2A. This chain is Tumor necrosis factor receptor type 1-associated DEATH domain protein, found in Bos taurus (Bovine).